The following is a 214-amino-acid chain: Octanoyltransferase (214 aa).

Residues 32 to 207 (EDTLDEIWLV…NLLALLNHPP (176 aa)) form the BPL/LPL catalytic domain. Substrate is bound by residues 71–78 (RGGQVTYH), 138–140 (SLG), and 151–153 (GLA). The active-site Acyl-thioester intermediate is cysteine 169.

The protein belongs to the LipB family.

Its subcellular location is the cytoplasm. It carries out the reaction octanoyl-[ACP] + L-lysyl-[protein] = N(6)-octanoyl-L-lysyl-[protein] + holo-[ACP] + H(+). It participates in protein modification; protein lipoylation via endogenous pathway; protein N(6)-(lipoyl)lysine from octanoyl-[acyl-carrier-protein]: step 1/2. Its function is as follows. Catalyzes the transfer of endogenously produced octanoic acid from octanoyl-acyl-carrier-protein onto the lipoyl domains of lipoate-dependent enzymes. Lipoyl-ACP can also act as a substrate although octanoyl-ACP is likely to be the physiological substrate. The polypeptide is Octanoyltransferase (Klebsiella pneumoniae (strain 342)).